The sequence spans 134 residues: NADH-quinone oxidoreductase subunit A 1 (134 aa).

The next 3 membrane-spanning stretches (helical) occupy residues 10-30, 65-85, and 94-114; these read LIPL…LLLA, FYLI…ILAW, and IPGL…LVWL.

This sequence belongs to the complex I subunit 3 family. NDH-1 is composed of 14 different subunits. Subunits NuoA, H, J, K, L, M, N constitute the membrane sector of the complex.

It is found in the cell inner membrane. It carries out the reaction a quinone + NADH + 5 H(+)(in) = a quinol + NAD(+) + 4 H(+)(out). NDH-1 shuttles electrons from NADH, via FMN and iron-sulfur (Fe-S) centers, to quinones in the respiratory chain. The immediate electron acceptor for the enzyme in this species is believed to be ubiquinone. Couples the redox reaction to proton translocation (for every two electrons transferred, four hydrogen ions are translocated across the cytoplasmic membrane), and thus conserves the redox energy in a proton gradient. The protein is NADH-quinone oxidoreductase subunit A 1 of Citrifermentans bemidjiense (strain ATCC BAA-1014 / DSM 16622 / JCM 12645 / Bem) (Geobacter bemidjiensis).